The sequence spans 421 residues: Putative NBPF family member NBPF7 (421 aa).

Positions 87 to 143 (IKSMLREELQFKEEKLAEQLKQAEELRQYKVLVHSQERELIQLREKLREGRDASHSL) form a coiled coil. 3 disordered regions span residues 179–251 (VHKL…KITS), 312–334 (EKEV…HDVS), and 402–421 (YNSK…FTED). 2 Olduvai domains span residues 190 to 279 (EDEN…NILL) and 280 to 391 (ENQN…RMSQ). The segment covering 194–217 (DKTKELDKVQESPAPREEQKAEEK) has biased composition (basic and acidic residues). The span at 230-243 (TYSNSHGPSDSNPP) shows a compositional bias: polar residues. Residues 312–333 (EKEVLQDSPEERVTTSCSDHDV) are compositionally biased toward basic and acidic residues. Polar residues predominate over residues 403–421 (NSKPSSIPNTTLQGSFTED).

The protein belongs to the NBPF family.

It is found in the cytoplasm. This Homo sapiens (Human) protein is Putative NBPF family member NBPF7.